A 59-amino-acid polypeptide reads, in one-letter code: UPF0391 membrane protein lpp2589 (59 aa).

The next 2 membrane-spanning stretches (helical) occupy residues 5–25 (ALIF…GIAV) and 30–50 (IAKI…IMGL).

It belongs to the UPF0391 family.

It is found in the cell membrane. The protein is UPF0391 membrane protein lpp2589 of Legionella pneumophila (strain Paris).